Here is a 65-residue protein sequence, read N- to C-terminus: Protein MalX (65 aa).

The chain is Protein MalX (malX) from Klebsiella pneumoniae.